A 476-amino-acid chain; its full sequence is UDP-N-acetylmuramoylalanine--D-glutamate ligase (476 aa).

122–128 lines the ATP pocket; the sequence is GSNAKST.

It belongs to the MurCDEF family.

Its subcellular location is the cytoplasm. It catalyses the reaction UDP-N-acetyl-alpha-D-muramoyl-L-alanine + D-glutamate + ATP = UDP-N-acetyl-alpha-D-muramoyl-L-alanyl-D-glutamate + ADP + phosphate + H(+). It participates in cell wall biogenesis; peptidoglycan biosynthesis. Cell wall formation. Catalyzes the addition of glutamate to the nucleotide precursor UDP-N-acetylmuramoyl-L-alanine (UMA). The sequence is that of UDP-N-acetylmuramoylalanine--D-glutamate ligase from Psychrobacter arcticus (strain DSM 17307 / VKM B-2377 / 273-4).